The following is a 471-amino-acid chain: Ribulose bisphosphate carboxylase large chain (471 aa).

Substrate contacts are provided by N115 and T165. Catalysis depends on K167, which acts as the Proton acceptor. Residue K169 coordinates substrate. The Mg(2+) site is built by K193, D195, and E196. K193 is modified (N6-carboxylysine). Residue H286 is the Proton acceptor of the active site. Positions 287, 319, and 371 each coordinate substrate.

It belongs to the RuBisCO large chain family. Type I subfamily. In terms of assembly, heterohexadecamer of 8 large chains and 8 small chains. It depends on Mg(2+) as a cofactor.

It is found in the carboxysome. It catalyses the reaction 2 (2R)-3-phosphoglycerate + 2 H(+) = D-ribulose 1,5-bisphosphate + CO2 + H2O. The catalysed reaction is D-ribulose 1,5-bisphosphate + O2 = 2-phosphoglycolate + (2R)-3-phosphoglycerate + 2 H(+). RuBisCO catalyzes two reactions: the carboxylation of D-ribulose 1,5-bisphosphate, the primary event in carbon dioxide fixation, as well as the oxidative fragmentation of the pentose substrate in the photorespiration process. Both reactions occur simultaneously and in competition at the same active site. The chain is Ribulose bisphosphate carboxylase large chain from Prochlorococcus marinus (strain MIT 9515).